The primary structure comprises 402 residues: mRNA-capping enzyme subunit alpha (402 aa).

Residue Lys66 is the N6-GMP-lysine intermediate of the active site.

It belongs to the eukaryotic GTase family. Heterodimer. The mRNA-capping enzyme is composed of two separate chains alpha and beta, respectively a mRNA guanylyltransferase and an mRNA 5'-triphosphate monophosphatase.

The protein localises to the nucleus. It carries out the reaction a 5'-end diphospho-ribonucleoside in mRNA + GTP + H(+) = a 5'-end (5'-triphosphoguanosine)-ribonucleoside in mRNA + diphosphate. Its function is as follows. Second step of mRNA capping. Transfer of the GMP moiety of GTP to the 5'-end of RNA via an enzyme-GMP covalent reaction intermediate. This chain is mRNA-capping enzyme subunit alpha (rnp-2), found in Neurospora crassa (strain ATCC 24698 / 74-OR23-1A / CBS 708.71 / DSM 1257 / FGSC 987).